A 106-amino-acid chain; its full sequence is Apovitellenin-1 (106 aa).

Residues M1–S24 form the signal peptide.

It belongs to the apovitellenin family. In terms of assembly, homodimer; disulfide-linked. Produced by the liver, secreted into the blood and then sequestred by receptor mediated endocytosis into growing oocytes.

Protein component of the very low density lipoprotein (VLDL) of egg-laying females. Potent lipoprotein lipase inhibitor, preventing the loss of triglycerides from VLDL on their way from the liver to the growing oocytes. This Gallus gallus (Chicken) protein is Apovitellenin-1.